We begin with the raw amino-acid sequence, 562 residues long: Glutamate--tRNA ligase (562 aa).

Positions 104-114 (PNPDFYMTLGN) match the 'HIGH' region motif.

This sequence belongs to the class-I aminoacyl-tRNA synthetase family. Glutamate--tRNA ligase type 2 subfamily.

It localises to the cytoplasm. The enzyme catalyses tRNA(Glu) + L-glutamate + ATP = L-glutamyl-tRNA(Glu) + AMP + diphosphate. Its function is as follows. Catalyzes the attachment of glutamate to tRNA(Glu) in a two-step reaction: glutamate is first activated by ATP to form Glu-AMP and then transferred to the acceptor end of tRNA(Glu). This Ignicoccus hospitalis (strain KIN4/I / DSM 18386 / JCM 14125) protein is Glutamate--tRNA ligase.